The sequence spans 458 residues: UDP-N-acetylmuramoylalanine--D-glutamate ligase (458 aa).

ATP is bound at residue 124–130 (GSDGKTT).

The protein belongs to the MurCDEF family.

Its subcellular location is the cytoplasm. It carries out the reaction UDP-N-acetyl-alpha-D-muramoyl-L-alanine + D-glutamate + ATP = UDP-N-acetyl-alpha-D-muramoyl-L-alanyl-D-glutamate + ADP + phosphate + H(+). It participates in cell wall biogenesis; peptidoglycan biosynthesis. Its function is as follows. Cell wall formation. Catalyzes the addition of glutamate to the nucleotide precursor UDP-N-acetylmuramoyl-L-alanine (UMA). The protein is UDP-N-acetylmuramoylalanine--D-glutamate ligase of Clostridium botulinum (strain Loch Maree / Type A3).